The chain runs to 396 residues: Elongation factor Tu (396 aa).

One can recognise a tr-type G domain in the interval 10–206; it reads KPHVNIGTIG…AVDESVPDPI (197 aa). The segment at 19 to 26 is G1; it reads GHVDHGKT. 19–26 contributes to the GTP binding site; sequence GHVDHGKT. T26 lines the Mg(2+) pocket. The segment at 62–66 is G2; it reads GITIN. A G3 region spans residues 83–86; sequence DAPG. Residues 83–87 and 138–141 each bind GTP; these read DAPGH and NKSD. The interval 138–141 is G4; the sequence is NKSD. A G5 region spans residues 176 to 178; the sequence is SGL.

It belongs to the TRAFAC class translation factor GTPase superfamily. Classic translation factor GTPase family. EF-Tu/EF-1A subfamily. In terms of assembly, monomer.

It localises to the cytoplasm. It catalyses the reaction GTP + H2O = GDP + phosphate + H(+). In terms of biological role, GTP hydrolase that promotes the GTP-dependent binding of aminoacyl-tRNA to the A-site of ribosomes during protein biosynthesis. This Renibacterium salmoninarum (strain ATCC 33209 / DSM 20767 / JCM 11484 / NBRC 15589 / NCIMB 2235) protein is Elongation factor Tu.